The primary structure comprises 635 residues: MLNRIQTLMKTANNYETIEILRNYLRLYIILARNEEGHGILIYDDNIDSVMSMMNITILEVIGLTTHCTKLRSSPPIPMSRLFMDEIDHESYYSPKTSDYPLIDIIRKRSHEQGDIALALERYGIENTDSISEINEWLSSKGLACYRFVKFNDYRKQMYRKFSRCTIVDSMIIGHIGHHYIWIKNLETYTRPEIDVLPFDIKYISRDELWARISSSLDQTHIKTIAVSVYGAITDNGPIPYMISTYPGNTFVNFNSVKNLILNFLDWIKDIMTSTRTIILVGYMSNLFDIPLLTVYWPNNCGWKIYNNTLISSDGARVIWMDAYKFSCGLSLQDYCYHWGSKPESRPFDLIKKSDAKRNSKSLVKESMASLKSLYEAFETQSGALEVLMSPCRMFSFSRIEDMFLTSVINRVSENTGMGMYYPTNDIPSLFIESSICLDYIIVNNQESNKYRIKSVLDIISSKQYPAGRPNYVKNGTKGKLYIALCKVTVPTNDHIPVVYHDDDNTTTFITVLTSVDIETAIRAGYSIVELGALQWDNNIPELKNGLLDSIKMIYDLNAVTTNNLLEQLIENINFNNSSIISLFYTFAISYCRAFIYSIMETIDPVYISQFSYKELYVSSSYKDINESMSQMVKL.

The protein belongs to the orthopoxvirus OPG056 family. As to quaternary structure, interacts with protein OPG164. Interacts with protein OPG064.

Its subcellular location is the virion membrane. It localises to the host endosome. Its function is as follows. Plays a role in intracellular enveloped virus (IEV) transport to the cell surface through microtubule transport. Together with protein OPG064, forms a complex that interacts with host KLC2 (kinesin light chain isoform 2) to engage the kinesin-1 complex and thereby promote IEV trafficking. This is Protein OPG056 (OPG056) from Homo sapiens (Human).